The following is a 288-amino-acid chain: Bifunctional protein FolD (288 aa).

NADP(+) is bound by residues 165 to 167 (GRS), S190, and I231.

It belongs to the tetrahydrofolate dehydrogenase/cyclohydrolase family. As to quaternary structure, homodimer.

The enzyme catalyses (6R)-5,10-methylene-5,6,7,8-tetrahydrofolate + NADP(+) = (6R)-5,10-methenyltetrahydrofolate + NADPH. The catalysed reaction is (6R)-5,10-methenyltetrahydrofolate + H2O = (6R)-10-formyltetrahydrofolate + H(+). It participates in one-carbon metabolism; tetrahydrofolate interconversion. Functionally, catalyzes the oxidation of 5,10-methylenetetrahydrofolate to 5,10-methenyltetrahydrofolate and then the hydrolysis of 5,10-methenyltetrahydrofolate to 10-formyltetrahydrofolate. This Nitrosospira multiformis (strain ATCC 25196 / NCIMB 11849 / C 71) protein is Bifunctional protein FolD.